We begin with the raw amino-acid sequence, 253 residues long: tRNA 2'-phosphotransferase 1 (253 aa).

Position 1 is an N-acetylmethionine (Met-1). Disordered regions lie at residues 1–29 (MNFSGGGRQEAAGSRGRRAPRPREQDRDV) and 225–253 (KPLSLAGDEETECQSSPKHSSRERRRIQQ). At Ser-240 the chain carries Phosphoserine. Over residues 243-253 (HSSRERRRIQQ) the composition is skewed to basic residues.

This sequence belongs to the KptA/TPT1 family. In terms of tissue distribution, widely expressed. Weakly or not expressed in lung, spleen, small intestine and peripheral blood leukocytes.

It catalyses the reaction 2'-phospho-[ligated tRNA] + NAD(+) = mature tRNA + ADP-alpha-D-ribose 1'',2''-cyclic phosphate + nicotinamide. Its function is as follows. Catalyzes the last step of tRNA splicing, the transfer of the splice junction 2'-phosphate from ligated tRNA to NAD to produce ADP-ribose 1''-2'' cyclic phosphate. This is tRNA 2'-phosphotransferase 1 (TRPT1) from Homo sapiens (Human).